The chain runs to 357 residues: Cinnamyl alcohol dehydrogenase 1 (357 aa).

In terms of domain architecture, Enoyl reductase (ER) spans 20–348 (GILSPYTYTL…KNDVRYRFVV (329 aa)). Zn(2+) is bound at residue cysteine 47. Residue serine 49 participates in NADP(+) binding. Zn(2+)-binding residues include histidine 69, glutamate 70, cysteine 100, cysteine 103, cysteine 106, cysteine 114, and cysteine 163. NADP(+)-binding positions include threonine 167, 188-193 (GLGGVG), 211-216 (SSSDKK), threonine 251, glycine 275, and 298-300 (SFI).

It belongs to the zinc-containing alcohol dehydrogenase family. Homodimer. Requires Zn(2+) as cofactor. As to expression, accumulates mainly in the placenta of red fruits, and, to a lower extent, in green fruits placenta, pericarp and seeds.

The protein resides in the cytoplasm. The enzyme catalyses (E)-cinnamyl alcohol + NADP(+) = (E)-cinnamaldehyde + NADPH + H(+). It carries out the reaction (E)-coniferol + NADP(+) = (E)-coniferaldehyde + NADPH + H(+). It catalyses the reaction (E)-sinapyl alcohol + NADP(+) = (E)-sinapaldehyde + NADPH + H(+). The catalysed reaction is (E)-4-coumaroyl alcohol + NADP(+) = (E)-4-coumaraldehyde + NADPH + H(+). The enzyme catalyses (E)-caffeyl alcohol + NADP(+) = (E)-caffeyl aldehyde + NADPH + H(+). It carries out the reaction vanillin + NADPH + H(+) = 4-hydroxy-3-methoxy-benzenemethanol + NADP(+). The protein operates within aromatic compound metabolism; phenylpropanoid biosynthesis. With respect to regulation, inhibited, in a concentration-dependent manner, by N-(O-hydroxyphenyl) sulfinamoyltertiobutyl acetate (OHPAS), a specific cinnamyl alcohol dehydrogenase (CAD) inhibitor, as well as by ethylenediaminetetraacetic acid (EDTA), a metalloenzyme inhibitor. Its function is as follows. Involved in the biosynthesis of capsinoids natural products (e.g. capsiate), non-pungent alkaloids synthesized from phenylpropanoid intermediates in the placental tissue of sweet chili pepper fruit acting as repellant on herbivorous mammals. Catalyzes the reduction of vanillin to generate vanillyl alcohol, a precursor of capsiate, a non-pungent component that accumulates mainly in the placenta of mature red fruits, but also in green fruits to lower levels. Involved in lignin biosynthesis. Catalyzes the final step specific for the production of lignin monomers. Mediates the conversion of cinnamaldehyde and coniferaldehyde to cinnamyl alcohol and coniferyl alcohol, respectively. Catalyzes the NADPH-dependent reduction of 5-hydroxyconiferaldehyde, sinapaldehyde, 4-coumaraldehyde and caffeyl aldehyde to their respective alcohols. This is Cinnamyl alcohol dehydrogenase 1 from Capsicum annuum (Capsicum pepper).